An 878-amino-acid polypeptide reads, in one-letter code: Alanine--tRNA ligase (878 aa).

The Zn(2+) site is built by His-564, His-568, Cys-665, and His-669.

This sequence belongs to the class-II aminoacyl-tRNA synthetase family. It depends on Zn(2+) as a cofactor.

It is found in the cytoplasm. The catalysed reaction is tRNA(Ala) + L-alanine + ATP = L-alanyl-tRNA(Ala) + AMP + diphosphate. Its function is as follows. Catalyzes the attachment of alanine to tRNA(Ala) in a two-step reaction: alanine is first activated by ATP to form Ala-AMP and then transferred to the acceptor end of tRNA(Ala). Also edits incorrectly charged Ser-tRNA(Ala) and Gly-tRNA(Ala) via its editing domain. This is Alanine--tRNA ligase from Natranaerobius thermophilus (strain ATCC BAA-1301 / DSM 18059 / JW/NM-WN-LF).